A 340-amino-acid polypeptide reads, in one-letter code: Maltose epimerase (340 aa).

Residue Arg-79 coordinates substrate. The active-site Proton donor is the His-178. Residue Asp-247 participates in substrate binding. Glu-305 acts as the Proton acceptor in catalysis.

It belongs to the aldose epimerase family.

The catalysed reaction is alpha-maltose = beta-maltose. It functions in the pathway carbohydrate metabolism; hexose metabolism. In terms of biological role, catalyzes the interconversion of alpha and beta anomers of maltose. This Levilactobacillus brevis (strain ATCC 367 / BCRC 12310 / CIP 105137 / JCM 1170 / LMG 11437 / NCIMB 947 / NCTC 947) (Lactobacillus brevis) protein is Maltose epimerase.